The sequence spans 354 residues: FAD synthetase 1, chloroplastic (354 aa).

Residues 1 to 75 (MLCGGSRASV…SQGDDHPELS (75 aa)) constitute a chloroplast transit peptide. The interval 228 to 248 (SVNTEEEDSKSKERGQVSSTR) is disordered.

Requires Mg(2+) as cofactor.

The protein localises to the plastid. Its subcellular location is the chloroplast. It catalyses the reaction FMN + ATP + H(+) = FAD + diphosphate. It participates in cofactor biosynthesis; FAD biosynthesis; FAD from FMN: step 1/1. Catalyzes the adenylation of flavin mononucleotide (FMN) to form flavin adenine dinucleotide (FAD) coenzyme. In Arabidopsis thaliana (Mouse-ear cress), this protein is FAD synthetase 1, chloroplastic.